Reading from the N-terminus, the 691-residue chain is MNHHHYSLVIFHLILFLSLDFPTLSHRFSPPLQNLTLYGDAFFRDRTISLTQQQPCFPSVTTPPSKPSSSGIGRALYVYPIKFLEPSTNTTASFSCRFSFSIIASPSCPFGDGFAFLITSNADSFVFSNGFLGLPNPDDSFIAVEFDTRFDPVHGDINDNHVGIDVSSIFSVSSVDAISKGFDLKSGKKMMAWIEYSDVLKLIRVWVGYSRVKPTSPVLSTQIDLSGKVKEYMHVGFSASNAGIGSALHIVERWKFRTFGSHSDAIQEEEEEKDEECLVCSGEVSENPKEIHRKGFNFRVTVVGLKIPVWSLLPGLAAIVILVAFIVFSLICGKKRISEEADSNSGLVRMPGRLSLAEIKSATSGFNENAIVGQGASATVYRGSIPSIGSVAVKRFDREHWPQCNRNPFTTEFTTMTGYLRHKNLVQFQGWCSEGTETALVFEYLPNGSLSEFLHKKPSSDPSEEIIVLSWKQRVNIILGVASALTYLHEECERQIIHRDVKTCNIMLDAEFNAKLGDFGLAEIYEHSALLAGRAATLPAGTMGYLAPEYVYTGVPSEKTDVYSFGVVVLEVCTGRRPVGDDGAVLVDLMWSHWETGKVLDGADIMLREEFDAEEMERVLMVGMVCAHPDSEKRPRVKDAVRIIRGEAPLPVLPARRPLLRIRPANEAEEMIVDGLVGEDLPWMTPKSHFS.

The first 25 residues, 1–25 (MNHHHYSLVIFHLILFLSLDFPTLS), serve as a signal peptide directing secretion. The Extracellular portion of the chain corresponds to 26–311 (HRFSPPLQNL…VVGLKIPVWS (286 aa)). The tract at residues 27 to 257 (RFSPPLQNLT…LHIVERWKFR (231 aa)) is legume-lectin like. Residues Asn34 and Asn89 are each glycosylated (N-linked (GlcNAc...) asparagine). The chain crosses the membrane as a helical span at residues 312 to 332 (LLPGLAAIVILVAFIVFSLIC). Residues 333 to 691 (GKKRISEEAD…PWMTPKSHFS (359 aa)) lie on the Cytoplasmic side of the membrane. A Protein kinase domain is found at 366 to 653 (FNENAIVGQG…IRGEAPLPVL (288 aa)). Residues 372 to 380 (VGQGASATV) and Lys394 contribute to the ATP site. The active-site Proton acceptor is the Asp500.

This sequence in the C-terminal section; belongs to the protein kinase superfamily. Ser/Thr protein kinase family. The protein in the N-terminal section; belongs to the leguminous lectin family.

It localises to the cell membrane. The catalysed reaction is L-seryl-[protein] + ATP = O-phospho-L-seryl-[protein] + ADP + H(+). It catalyses the reaction L-threonyl-[protein] + ATP = O-phospho-L-threonyl-[protein] + ADP + H(+). In terms of biological role, involved in resistance response to the pathogenic oomycetes Phytophthora infestans and Phytophthora capsici and to the pathogenic bacteria Pseudomonas syringae. The sequence is that of L-type lectin-domain containing receptor kinase S.6 from Arabidopsis thaliana (Mouse-ear cress).